Reading from the N-terminus, the 344-residue chain is Anthranilate phosphoribosyltransferase (344 aa).

5-phospho-alpha-D-ribose 1-diphosphate-binding positions include Gly81, 84–85, Ser89, 91–94, 109–117, and Ala121; these read GD, NIST, and KHGNRALSS. An anthranilate-binding site is contributed by Gly81. Mg(2+) is bound at residue Ser93. Residue Asn112 participates in anthranilate binding. Arg167 contributes to the anthranilate binding site. Residues Asp226 and Glu227 each contribute to the Mg(2+) site.

It belongs to the anthranilate phosphoribosyltransferase family. As to quaternary structure, homodimer. The cofactor is Mg(2+).

It carries out the reaction N-(5-phospho-beta-D-ribosyl)anthranilate + diphosphate = 5-phospho-alpha-D-ribose 1-diphosphate + anthranilate. It functions in the pathway amino-acid biosynthesis; L-tryptophan biosynthesis; L-tryptophan from chorismate: step 2/5. Catalyzes the transfer of the phosphoribosyl group of 5-phosphorylribose-1-pyrophosphate (PRPP) to anthranilate to yield N-(5'-phosphoribosyl)-anthranilate (PRA). This is Anthranilate phosphoribosyltransferase from Xanthobacter autotrophicus (strain ATCC BAA-1158 / Py2).